A 525-amino-acid polypeptide reads, in one-letter code: uncharacterized protein (525 aa).

A signal peptide spans 1–21 (MLECLSALLVLFAGGGGSVLA). Over 22-448 (AVQSKTVADP…ISAASQLDKR (427 aa)) the chain is Extracellular. Residues 242 to 264 (KVSSENCSKDTDDKSGSKKERNT) are disordered. The helical transmembrane segment at 449–469 (IFIFTAITVSITTLMMLGFSY) threads the bilayer. The Cytoplasmic portion of the chain corresponds to 470 to 525 (RSRVSFRDHSIDDSDDDNDWSDDEVEFDEEYFYSLPVSIPEKGISLDKMAQQLGVE).

It localises to the membrane. This is an uncharacterized protein from Saccharomyces cerevisiae (strain ATCC 204508 / S288c) (Baker's yeast).